Consider the following 469-residue polypeptide: 3-isopropylmalate dehydratase large subunit (469 aa).

Cysteine 350, cysteine 410, and cysteine 413 together coordinate [4Fe-4S] cluster.

It belongs to the aconitase/IPM isomerase family. LeuC type 1 subfamily. Heterodimer of LeuC and LeuD. The cofactor is [4Fe-4S] cluster.

The catalysed reaction is (2R,3S)-3-isopropylmalate = (2S)-2-isopropylmalate. The protein operates within amino-acid biosynthesis; L-leucine biosynthesis; L-leucine from 3-methyl-2-oxobutanoate: step 2/4. In terms of biological role, catalyzes the isomerization between 2-isopropylmalate and 3-isopropylmalate, via the formation of 2-isopropylmaleate. The protein is 3-isopropylmalate dehydratase large subunit of Sinorhizobium medicae (strain WSM419) (Ensifer medicae).